The chain runs to 568 residues: Protein NDNF (568 aa).

The N-terminal stretch at 1 to 19 (MELFYWCLLCLLLPLTSRT) is a signal peptide. Fibronectin type-III domains lie at 261–331 (NLGK…VGAF) and 445–564 (PSLP…IVKT). N-linked (GlcNAc...) asparagine glycans are attached at residues asparagine 322 and asparagine 488.

Binds heparin and chondroitin sulfate. In terms of processing, O-glycosylated; contains heparan sulfate and chondroitin sulfate. Post-translationally, N-glycosylated. In terms of tissue distribution, expressed in brain and spinal cord with no expression detected in heart, kidney or liver. Expressed by neurons but not by astrocytes. In the brain, detected in the cerebrum, cerebellum and olfactory bulbs. In the cerebral cortex, highly expressed in Cajal-Retzius cells. Also expressed in hippocampal neurons and in Purkinje and granule cells of the cerebellum (at protein level). Expressed in neurons along the GnRH migratory route.

It is found in the secreted. Functionally, secretory protein that plays a role in various cellular processes. Acts as a chemorepellent acting on gonadotropin-releasing hormone (GnRH) expressing neurons regulating their migration to the hypothalamus. Also promotes neuron migration, growth and survival as well as neurite outgrowth and is involved in the development of the olfactory system. May also act through the regulation of growth factors activity and downstream signaling. Also regulates extracellular matrix assembly and cell adhesiveness. Promotes endothelial cell survival, vessel formation and plays an important role in the process of revascularization through NOS3-dependent mechanisms. The chain is Protein NDNF (Ndnf) from Mus musculus (Mouse).